Consider the following 506-residue polypeptide: Chromodomain Y-like protein 2 (506 aa).

Positions 7-67 (YEVERIVDKR…LHMSKDKRIK (61 aa)) constitute a Chromo domain. The interval 64 to 177 (KRIKSGKQSS…RHFGNGSHQP (114 aa)) is disordered. The span at 88-98 (KLSHRPSDPGK) shows a compositional bias: basic and acidic residues. The segment covering 101 to 120 (GTSHKRKRINPPLAKPKKGY) has biased composition (basic residues). Positions 133-143 (KTVSYRTTPSG) are enriched in polar residues.

As to quaternary structure, interacts (via chromo domain) with histone H3K9me3. In terms of tissue distribution, ubiquitously expressed.

The protein resides in the nucleus. The sequence is that of Chromodomain Y-like protein 2 (CDYL2) from Homo sapiens (Human).